The sequence spans 303 residues: Oxygen-dependent coproporphyrinogen-III oxidase (303 aa).

Substrate is bound at residue Ser93. His97 and His107 together coordinate a divalent metal cation. The active-site Proton donor is the His107. Position 109–111 (109–111) interacts with substrate; it reads NIR. A divalent metal cation is bound by residues His146 and His176. The segment at 241–276 is important for dimerization; it reads YVEFNLLLDRGTLFGIQSNGRIESILSSMPPLVKWE.

It belongs to the aerobic coproporphyrinogen-III oxidase family. Homodimer. Requires a divalent metal cation as cofactor.

Its subcellular location is the cytoplasm. It catalyses the reaction coproporphyrinogen III + O2 + 2 H(+) = protoporphyrinogen IX + 2 CO2 + 2 H2O. The protein operates within porphyrin-containing compound metabolism; protoporphyrin-IX biosynthesis; protoporphyrinogen-IX from coproporphyrinogen-III (O2 route): step 1/1. In terms of biological role, involved in the heme biosynthesis. Catalyzes the aerobic oxidative decarboxylation of propionate groups of rings A and B of coproporphyrinogen-III to yield the vinyl groups in protoporphyrinogen-IX. The chain is Oxygen-dependent coproporphyrinogen-III oxidase from Wigglesworthia glossinidia brevipalpis.